The following is a 294-amino-acid chain: Aquaporin NIP1-2 (294 aa).

M1 is subject to N-acetylmethionine. Helical transmembrane passes span 54–74 and 82–102; these read LMAE…AVAV and VTLP…VYSL. The NPA 1 signature appears at 111-113; that stretch reads NPA. Helical transmembrane passes span 133–153, 177–197, and 201–221; these read VISQ…LFGL, SFVI…GVAT, and AIGE…VIIA. The short motif at 230-232 is the NPA 2 element; the sequence is NPG. Residues 248-268 form a helical membrane-spanning segment; sequence WIYIVSPIVGAVSGAWVYNMV. S283 is modified (phosphoserine).

This sequence belongs to the MIP/aquaporin (TC 1.A.8) family. NIP (TC 1.A.8.12) subfamily. In terms of tissue distribution, expressed in developing seeds.

It localises to the membrane. Functionally, water channel probably required to promote glycerol permeability and water transport across cell membranes. In Arabidopsis thaliana (Mouse-ear cress), this protein is Aquaporin NIP1-2 (NIP1-2).